The following is a 274-amino-acid chain: Putative bidirectional sugar transporter SWEET7d (274 aa).

The Extracellular segment spans residues 1 to 8 (MVPDLIRN). A helical membrane pass occupies residues 9–29 (VVGIVGNVISFGLFLSPVPTF). In terms of domain architecture, MtN3/slv 1 spans 9 to 96 (VVGIVGNVIS…TIFFLFSDKK (88 aa)). The Cytoplasmic segment spans residues 30–45 (WRIIKNKDVRDFKADQ). A helical transmembrane segment spans residues 46-66 (YLATLLNCMLWVFYGLPIVHP). Topologically, residues 67–68 (NS) are extracellular. Residues 69 to 89 (ILVVTINGIGLVIEAVYLTIF) form a helical membrane-spanning segment. Over 90–100 (FLFSDKKNKKK) the chain is Cytoplasmic. The helical transmembrane segment at 101–121 (MGVVLATEALFMAAVALGVLL) threads the bilayer. Over 122–130 (DAHTHQRRS) the chain is Extracellular. Residues 131 to 151 (LIVGILCVIFGTIMYSSPLTI) traverse the membrane as a helical segment. In terms of domain architecture, MtN3/slv 2 spans 132–214 (IVGILCVIFG…QLILYAIYYR (83 aa)). Topologically, residues 152–164 (MSQVVKTKSVEYM) are cytoplasmic. A helical transmembrane segment spans residues 165 to 185 (PLLLSVVSFLNGLCWTSYALI). Topologically, residues 186-188 (RFD) are extracellular. Residues 189-209 (IFITIPNGLGVLFALMQLILY) traverse the membrane as a helical segment. The Cytoplasmic portion of the chain corresponds to 210–274 (AIYYRTTPKK…SISRLSHKLA (65 aa)). The disordered stretch occupies residues 218–274 (KKPSTTGPHPRSRIRTSSYQPSPPSPRAPASSPLSARTTTSMAAMSPSISRLSHKLA). A compositionally biased stretch (low complexity) spans 245–258 (APASSPLSARTTTS).

It belongs to the SWEET sugar transporter family. As to quaternary structure, forms homooligomers and/or heterooligomers.

Its subcellular location is the cell membrane. In terms of biological role, mediates both low-affinity uptake and efflux of sugar across the plasma membrane. This chain is Putative bidirectional sugar transporter SWEET7d (SWEET7D), found in Oryza sativa subsp. japonica (Rice).